A 410-amino-acid chain; its full sequence is uncharacterized protein (410 aa).

11 consecutive transmembrane segments (helical) span residues 14–34 (IIIG…FLAI), 48–68 (GLVI…GGYI), 82–102 (IFGW…WVFF), 140–160 (YAAI…FGSS), 164–184 (TPFL…ALQF), 212–232 (YLFT…SQFS), 251–271 (LYGL…FPIV), 279–299 (PLCS…IFTV), 303–323 (VPSI…LFSM), 342–362 (GAIG…GICI), and 371–391 (IYIF…LAFA).

It belongs to the major facilitator superfamily. TCR/Tet family.

It is found in the cell membrane. This is an uncharacterized protein from Bacillus subtilis (strain 168).